Reading from the N-terminus, the 508-residue chain is Probable protein kinase UbiB (508 aa).

The 377-residue stretch at 118 to 494 folds into the Protein kinase domain; the sequence is DFDLKPVASA…QKRQNFLLLL (377 aa). ATP-binding positions include 124–132 and Lys151; that span reads VASASVAQV. Residue Asp286 is the Proton acceptor of the active site. A helical membrane pass occupies residues 488–508; that stretch reads QNFLLLLIAILLAALLAKSLL.

Belongs to the ABC1 family. UbiB subfamily.

The protein resides in the cell inner membrane. The protein operates within cofactor biosynthesis; ubiquinone biosynthesis [regulation]. Its function is as follows. Is probably a protein kinase regulator of UbiI activity which is involved in aerobic coenzyme Q (ubiquinone) biosynthesis. In Chromobacterium violaceum (strain ATCC 12472 / DSM 30191 / JCM 1249 / CCUG 213 / NBRC 12614 / NCIMB 9131 / NCTC 9757 / MK), this protein is Probable protein kinase UbiB.